The primary structure comprises 1665 residues: Mediator of RNA polymerase II transcription subunit 13 (1665 aa).

Disordered regions lie at residues 411-460 (KETE…IDKN), 482-512 (INLD…ETKP), 551-580 (TVSQ…GTET), and 673-781 (LDSS…NQIS). The span at 415 to 445 (PENESENDMEIDDLFGGDESDDNDDLEEAGN) shows a compositional bias: acidic residues. Residues 499-512 (VPDKENFKPKETKP) are compositionally biased toward basic and acidic residues. Residues 551–568 (TVSQSAVTTNPPSVGSAP) are compositionally biased toward low complexity. The span at 682-720 (EGGEDIEDDDNDYEDEGDDDEEEEGEEEEEEESDEDEIS) shows a compositional bias: acidic residues. The span at 728–762 (LKLNTQNESVPPQQSNYNPVNITDSGSNTTNNITD) shows a compositional bias: polar residues.

Belongs to the Mediator complex subunit 13 family. Component of the SRB8-11 complex, which itself associates with the Mediator complex.

The protein resides in the nucleus. In terms of biological role, component of the SRB8-11 complex. The SRB8-11 complex is a regulatory module of the Mediator complex which is itself involved in regulation of basal and activated RNA polymerase II-dependent transcription. The SRB8-11 complex may be involved in the transcriptional repression of a subset of genes regulated by Mediator. It may inhibit the association of the Mediator complex with RNA polymerase II to form the holoenzyme complex. The sequence is that of Mediator of RNA polymerase II transcription subunit 13 (SSN2) from Candida albicans (strain SC5314 / ATCC MYA-2876) (Yeast).